We begin with the raw amino-acid sequence, 336 residues long: Torsin-1B (336 aa).

The first 24 residues, 1-24, serve as a signal peptide directing secretion; that stretch reads MRRIGAFGGSTALWALLAAHVAGA. Asn64 carries N-linked (GlcNAc...) asparagine glycosylation. Residue 109 to 116 coordinates ATP; sequence GWAGTGKN. The N-linked (GlcNAc...) asparagine glycan is linked to Asn165.

It belongs to the ClpA/ClpB family. Torsin subfamily. Homohexamer. Interacts with TOR1A; the interaction may be specific of neural tissues. Interacts with TOR1AIP1; TOR1AIP1 is required for TOR1B location on the nuclear membrane. Interacts (ATP-bound) with TOR1AIP2; important for endoplasmic reticulum integrity. Post-translationally, N-glycosylated. As to expression, highly expressed in liver and muscle; lower expression levels are observed in brain (at protein level).

It is found in the endoplasmic reticulum lumen. The protein localises to the nucleus membrane. The enzyme catalyses ATP + H2O = ADP + phosphate + H(+). In terms of biological role, may serve as a molecular chaperone assisting in the proper folding of secreted and/or membrane proteins. Plays a role in non-neural cells nuclear envelope and endoplasmic reticulum integrity. May have a redundant function with TOR1A in non-neural tissues. This chain is Torsin-1B (Tor1b), found in Mus musculus (Mouse).